The sequence spans 946 residues: Protein translocase subunit SecA (946 aa).

ATP-binding positions include Gln89, 107 to 111, and Asp508; that span reads GEGKT. The interval 534 to 569 is disordered; the sequence is PEDSHKPPVPLQRRKDSSVGFGKEENNSKDKKVNHS. Positions 546–569 are enriched in basic and acidic residues; sequence RRKDSSVGFGKEENNSKDKKVNHS.

It belongs to the SecA family. Monomer and homodimer. Part of the essential Sec protein translocation apparatus which comprises SecA, SecYEG and auxiliary proteins SecDF. Other proteins may also be involved.

The protein localises to the cell inner membrane. Its subcellular location is the cellular thylakoid membrane. It is found in the cytoplasm. The catalysed reaction is ATP + H2O + cellular proteinSide 1 = ADP + phosphate + cellular proteinSide 2.. Part of the Sec protein translocase complex. Interacts with the SecYEG preprotein conducting channel. Has a central role in coupling the hydrolysis of ATP to the transfer of proteins into and across the cell membrane, serving as an ATP-driven molecular motor driving the stepwise translocation of polypeptide chains across the membrane. Its function is as follows. Probably participates in protein translocation into and across both the cytoplasmic and thylakoid membranes in cyanobacterial cells. This Prochlorococcus marinus (strain SARG / CCMP1375 / SS120) protein is Protein translocase subunit SecA.